Reading from the N-terminus, the 368-residue chain is Trans-enoyl reductase thnE (368 aa).

53–56 (VDVK) is a binding site for NADP(+). 140-147 (LATATAAY) lines the substrate pocket. Residues 179-182 (STAT), 202-205 (SPSN), Y220, and 267-268 (VE) contribute to the NADP(+) site. Residue 289–293 (VMTVW) participates in substrate binding. Residue 358–359 (PS) participates in NADP(+) binding.

This sequence belongs to the zinc-containing alcohol dehydrogenase family. In terms of assembly, monomer.

The enzyme catalyses malate + 6 malonyl-CoA + acetyl-CoA + 2 AH2 + 2 S-adenosyl-L-methionine + 5 NADPH + 9 H(+) = trihazone A + 2 A + 2 S-adenosyl-L-homocysteine + 6 CO2 + 5 NADP(+) + 7 CoA + 6 H2O. Its pathway is secondary metabolite biosynthesis. Functionally, trans-enoyl reductase; part of the gene cluster that produces the tetronate natural products trihazones. The PKS-NRPS synthetase thnA with the help of the trans-enoyl reductase thnE are responsible for the synthesis of the carboxylmethyl containing trihazone A. The PKS portion of thnA synthesizes beta-keto-triene chain from one acetyl-CoA and 6 equivalents of malonyl-CoA, in collaboration with thnE, which selectively reduces the enoyl intermediate during the first and fourth iteration of the PKS. The NRPS domain selects and activates malate, of which the alpha-hydroxyl group attacks the completed polyketide acyl-S-ACP chain to form the ester product. Intramolecular Dieckmann cyclization catalyzed by the terminal reductase domain releases the product as trihazone A from the PKS-NPRS. The pathway begins with the formation of trihazone A by the hybrid PKS-NRPS synthetase thnA and the trans-enoyl reductase thnE. Trihazone A is further decarboxylated by the 2-oxoglutarate-dependent dioxygenase thnC to produce trihazone D. The function of the FAD-dependent monooxygenase thnD has still to be identified. In Trichoderma harzianum (Hypocrea lixii), this protein is Trans-enoyl reductase thnE.